The primary structure comprises 1399 residues: DNA-directed RNA polymerase subunit beta' (1399 aa).

Cys70, Cys72, Cys85, and Cys88 together coordinate Zn(2+). Residues Asp460, Asp462, and Asp464 each coordinate Mg(2+). Zn(2+) is bound by residues Cys814, Cys888, Cys895, and Cys898.

It belongs to the RNA polymerase beta' chain family. The RNAP catalytic core consists of 2 alpha, 1 beta, 1 beta' and 1 omega subunit. When a sigma factor is associated with the core the holoenzyme is formed, which can initiate transcription. Mg(2+) serves as cofactor. Zn(2+) is required as a cofactor.

It carries out the reaction RNA(n) + a ribonucleoside 5'-triphosphate = RNA(n+1) + diphosphate. Functionally, DNA-dependent RNA polymerase catalyzes the transcription of DNA into RNA using the four ribonucleoside triphosphates as substrates. This is DNA-directed RNA polymerase subunit beta' from Pseudomonas fluorescens (strain SBW25).